The sequence spans 53 residues: Conotoxin Ac4.3b (53 aa).

Positions 1–11 (SDVRNAAVHER) are excised as a propeptide. Glutamine 12 carries the pyrrolidone carboxylic acid modification. Glutamate 14 carries the post-translational modification 4-carboxyglutamate. A glycan (O-linked (HexNAc...) serine) is linked at serine 18. 4-hydroxyproline occurs at positions 28, 33, and 48. Proline 48 carries the proline amide modification. The propeptide occupies 49-53 (GRRND).

This sequence belongs to the conotoxin A superfamily. Contains 3 disulfide bonds. Expressed by the venom duct.

It localises to the secreted. Its function is as follows. Probable neurotoxin with ion channel inhibitor activity. The protein is Conotoxin Ac4.3b of Conus achatinus (Little frog cone).